The sequence spans 289 residues: Syntaxin-2 (289 aa).

Residues 1–265 are Cytoplasmic-facing; that stretch reads MRDRLPDLTA…KYQSKARRKK (265 aa). A coiled-coil region spans residues 68–101; the sequence is EGKIKEELEDLDKEIKKTANRIRGKLKSIEQSCD. The t-SNARE coiled-coil homology domain occupies 192-254; it reads LNEIESRHKD…EHAKEETKKA (63 aa). The helical; Anchor for type IV membrane protein transmembrane segment at 266 to 289 threads the bilayer; the sequence is WIIAAVAVAVIAVLALIIGLSVGK.

The protein belongs to the syntaxin family. In terms of assembly, interacts with SYT6 and SYT8; the interaction is Ca(2+)-dependent.

The protein localises to the membrane. Its function is as follows. Essential for epithelial morphogenesis. May mediate Ca(2+)-regulation of exocytosis acrosomal reaction in sperm. The chain is Syntaxin-2 (Stx2) from Mus musculus (Mouse).